The chain runs to 545 residues: Chaperonin GroEL (545 aa).

Residues 30–33 (TLGP), Lys-51, 87–91 (DGTTT), Gly-415, and Asp-495 contribute to the ATP site.

The protein belongs to the chaperonin (HSP60) family. As to quaternary structure, forms a cylinder of 14 subunits composed of two heptameric rings stacked back-to-back. Interacts with the co-chaperonin GroES.

The protein resides in the cytoplasm. The catalysed reaction is ATP + H2O + a folded polypeptide = ADP + phosphate + an unfolded polypeptide.. Its function is as follows. Together with its co-chaperonin GroES, plays an essential role in assisting protein folding. The GroEL-GroES system forms a nano-cage that allows encapsulation of the non-native substrate proteins and provides a physical environment optimized to promote and accelerate protein folding. In Shewanella denitrificans (strain OS217 / ATCC BAA-1090 / DSM 15013), this protein is Chaperonin GroEL.